Consider the following 223-residue polypeptide: Methanol utilization control regulatory protein MoxX (223 aa).

A Response regulatory domain is found at 16 to 133; that stretch reads QILIVDDHPV…EICAAFTEVA (118 aa). The HTH luxR-type domain occupies 155 to 220; it reads PGTSAPRLTG…DLVVKGIRYF (66 aa). The segment at residues 179–198 is a DNA-binding region (H-T-H motif); sequence YRDIADRACISYKTVSNVSL.

Phosphorylated by MoxY.

It is found in the cytoplasm. Its function is as follows. Member of the two-component regulatory system MoxY/MoxX probably involved in the regulation of the methanol dehydrogenase expression. The sequence is that of Methanol utilization control regulatory protein MoxX (moxX) from Paracoccus denitrificans.